A 503-amino-acid polypeptide reads, in one-letter code: Probable DNA ligase (503 aa).

An ATP-binding site is contributed by Glu210. Residue Lys212 is the N6-AMP-lysine intermediate of the active site. The ATP site is built by Arg217, Arg232, Glu261, Phe296, Arg367, and Lys373.

The protein belongs to the ATP-dependent DNA ligase family. Requires Mg(2+) as cofactor.

It catalyses the reaction ATP + (deoxyribonucleotide)n-3'-hydroxyl + 5'-phospho-(deoxyribonucleotide)m = (deoxyribonucleotide)n+m + AMP + diphosphate.. Its function is as follows. DNA ligase that seals nicks in double-stranded DNA during DNA replication, DNA recombination and DNA repair. This chain is Probable DNA ligase, found in Rhodococcus jostii (strain RHA1).